A 250-amino-acid chain; its full sequence is 2,5-dichloro-2,5-cyclohexadiene-1,4-diol dehydrogenase (250 aa).

An NAD(+)-binding site is contributed by 9–34 (IIVTGGGSGIGRATVELLVASGANVA). Position 141 (S141) interacts with substrate. Y154 (proton acceptor) is an active-site residue.

Belongs to the short-chain dehydrogenases/reductases (SDR) family.

The catalysed reaction is 2,5-dichlorocyclohexa-2,5-dien-1,4-diol + NAD(+) = 2,5-dichlorohydroquinone + NADH + H(+). It functions in the pathway xenobiotic degradation; gamma-hexachlorocyclohexane degradation. Functionally, catalyzes the dehydrogenation of 2,5-dichloro-2,5-cyclohexadiene-1,4-diol (2,5-DDOL) to 2,5-dichlorohydroquinone (2,5-DCHQ), a step in the degradation of gamma-hexachlorocyclohexane (gamma-HCH or lindane). Has an essential role in this assimilation pathway that allows S.japonicum UT26 to grow on gamma-HCH as the sole source of carbon and energy. This is 2,5-dichloro-2,5-cyclohexadiene-1,4-diol dehydrogenase from Sphingobium indicum (strain DSM 16413 / CCM 7287 / MTCC 6362 / UT26 / NBRC 101211 / UT26S) (Sphingobium japonicum).